The sequence spans 327 residues: Phenylalanine--tRNA ligase alpha subunit (327 aa).

Residue glutamate 252 coordinates Mg(2+).

Belongs to the class-II aminoacyl-tRNA synthetase family. Phe-tRNA synthetase alpha subunit type 1 subfamily. As to quaternary structure, tetramer of two alpha and two beta subunits. The cofactor is Mg(2+).

The protein localises to the cytoplasm. It catalyses the reaction tRNA(Phe) + L-phenylalanine + ATP = L-phenylalanyl-tRNA(Phe) + AMP + diphosphate + H(+). This chain is Phenylalanine--tRNA ligase alpha subunit, found in Serratia proteamaculans (strain 568).